The sequence spans 368 residues: Alanine racemase (368 aa).

Lysine 40 (proton acceptor; specific for D-alanine) is an active-site residue. Lysine 40 bears the N6-(pyridoxal phosphate)lysine mark. Arginine 136 contributes to the substrate binding site. Catalysis depends on tyrosine 263, which acts as the Proton acceptor; specific for L-alanine. Residue methionine 310 coordinates substrate.

Belongs to the alanine racemase family. The cofactor is pyridoxal 5'-phosphate.

It catalyses the reaction L-alanine = D-alanine. The protein operates within amino-acid biosynthesis; D-alanine biosynthesis; D-alanine from L-alanine: step 1/1. Functionally, catalyzes the interconversion of L-alanine and D-alanine. May also act on other amino acids. This chain is Alanine racemase (alr), found in Streptococcus gordonii (strain Challis / ATCC 35105 / BCRC 15272 / CH1 / DL1 / V288).